The following is a 183-amino-acid chain: Small ribosomal subunit protein uS4c (183 aa).

Residues 82–143 form the S4 RNA-binding domain; that stretch reads MRLDNILFRL…KQRSKALIQN (62 aa).

Belongs to the universal ribosomal protein uS4 family. Part of the 30S ribosomal subunit. Contacts protein S5. The interaction surface between S4 and S5 is involved in control of translational fidelity.

The protein resides in the plastid. It is found in the chloroplast. One of the primary rRNA binding proteins, it binds directly to 16S rRNA where it nucleates assembly of the body of the 30S subunit. Its function is as follows. With S5 and S12 plays an important role in translational accuracy. The protein is Small ribosomal subunit protein uS4c (rps4) of Babiana stricta (Baboon flower).